A 177-amino-acid chain; its full sequence is NADH-quinone oxidoreductase subunit B (177 aa).

Cys56, Cys57, Cys121, and Cys151 together coordinate [4Fe-4S] cluster.

This sequence belongs to the complex I 20 kDa subunit family. NDH-1 is composed of 14 different subunits. Subunits NuoB, C, D, E, F, and G constitute the peripheral sector of the complex. [4Fe-4S] cluster is required as a cofactor.

Its subcellular location is the cell inner membrane. It carries out the reaction a quinone + NADH + 5 H(+)(in) = a quinol + NAD(+) + 4 H(+)(out). Its function is as follows. NDH-1 shuttles electrons from NADH, via FMN and iron-sulfur (Fe-S) centers, to quinones in the respiratory chain. Couples the redox reaction to proton translocation (for every two electrons transferred, four hydrogen ions are translocated across the cytoplasmic membrane), and thus conserves the redox energy in a proton gradient. The sequence is that of NADH-quinone oxidoreductase subunit B from Sphingopyxis alaskensis (strain DSM 13593 / LMG 18877 / RB2256) (Sphingomonas alaskensis).